Here is a 312-residue protein sequence, read N- to C-terminus: Olfactory receptor 51I2 (312 aa).

The Extracellular portion of the chain corresponds to 1–25 (MGLFNVTHPAFFLLTGIPGLESSHS). N5 carries an N-linked (GlcNAc...) asparagine glycan. The chain crosses the membrane as a helical span at residues 26-46 (WLSGPLCVMYAVALGGNTVIL). Residues 47 to 54 (QAVRVEPS) are Cytoplasmic-facing. The helical transmembrane segment at 55–75 (LHEPMYYFLSMLSFSDVAISM) threads the bilayer. Topologically, residues 76-99 (ATLPTVLRTFCLNARNITFDACLI) are extracellular. C97 and C189 are oxidised to a cystine. The chain crosses the membrane as a helical span at residues 100–120 (QMFLIHFFSMMESGILLAMSF). Residues 121–139 (DRYVAICDPLRYATVLTTE) are Cytoplasmic-facing. A helical membrane pass occupies residues 140-160 (VIAAMGLGAAARSFITLFPLP). At 161 to 196 (FLIKRLPICRSNVLSHSYCLHPDMMRLACADISINS) the chain is on the extracellular side. Residues 197-217 (IYGLFVLVSTFGMDLFFIFLS) form a helical membrane-spanning segment. The Cytoplasmic portion of the chain corresponds to 218–237 (YVLILRSVMATASREERLKA). The chain crosses the membrane as a helical span at residues 238 to 258 (LNTCVSHILAVLAFYVPMIGV). At 259–273 (STVHRFGKHVPCYIH) the chain is on the extracellular side. Residues 274-294 (VLMSNVYLFVPPVLNPLIYSA) form a helical membrane-spanning segment. Topologically, residues 295–312 (KTKEIRRAIFRMFHHIKI) are cytoplasmic.

It belongs to the G-protein coupled receptor 1 family.

It is found in the cell membrane. Odorant receptor. The chain is Olfactory receptor 51I2 (OR51I2) from Homo sapiens (Human).